A 73-amino-acid chain; its full sequence is MNPTKRNSHAIVEFVDVLLRDGAVIQADAIVTVAGVPLLGISLRAAIAGMTTMTEYGIFDGWDADHRRRNAQP.

Belongs to the gas vesicle GvpA family. In terms of assembly, gvpF to GvpM interact with each other in vitro, and may form multi-subunit complex(es). Might interact with GvpA.

The protein resides in the gas vesicle. Functionally, proteins GvpF to GvpM might be involved in nucleating gas vesicle formation. A minor component of the gas vesicle. Gas vesicles are hollow, gas filled proteinaceous nanostructures found in several microbial planktonic microorganisms. They allow positioning of halobacteria at the optimal depth for growth in the poorly aerated, shallow brine pools of their habitat. Its function is as follows. Expression of 2 c-vac DNA fragments containing 2 divergently transcribed regions (gvpE-gvpF-gvpG-gvpH-gvpI-gvpJ-gvpK-gvpL-gvpM and gvpA-gvpC-gvpN-gvpO) allows H.volcanii to produce gas vesicles. In Halobacterium salinarum (strain ATCC 700922 / JCM 11081 / NRC-1) (Halobacterium halobium), this protein is Gas vesicle protein M2.